Reading from the N-terminus, the 91-residue chain is Large ribosomal subunit protein uL23c (91 aa).

This sequence belongs to the universal ribosomal protein uL23 family. Part of the 50S ribosomal subunit.

It localises to the plastid. The protein resides in the chloroplast. Binds to 23S rRNA. The sequence is that of Large ribosomal subunit protein uL23c (rpl23) from Huperzia lucidula (Shining clubmoss).